The primary structure comprises 59 residues: Large ribosomal subunit protein uL30 (59 aa).

Belongs to the universal ribosomal protein uL30 family. Part of the 50S ribosomal subunit.

This Streptococcus agalactiae serotype Ia (strain ATCC 27591 / A909 / CDC SS700) protein is Large ribosomal subunit protein uL30.